A 234-amino-acid polypeptide reads, in one-letter code: Ankyrin repeat-containing protein C6C3.08 (234 aa).

ANK repeat units follow at residues 36–66, 70–100, 106–135, 140–169, and 173–203; these read DKRT…KPDE, AGWT…DVDP, GGQT…ELIR, QGQT…PLNT, and YGFT…TLRK.

This chain is Ankyrin repeat-containing protein C6C3.08, found in Schizosaccharomyces pombe (strain 972 / ATCC 24843) (Fission yeast).